The following is a 226-amino-acid chain: PKHD-type hydroxylase Bind_0236 (226 aa).

One can recognise a Fe2OG dioxygenase domain in the interval 78-178 (TIFPPLFNRY…RIASFFWIQS (101 aa)). Residues His96, Asp98, and His159 each contribute to the Fe cation site. Arg169 is a 2-oxoglutarate binding site.

Fe(2+) is required as a cofactor. Requires L-ascorbate as cofactor.

This is PKHD-type hydroxylase Bind_0236 from Beijerinckia indica subsp. indica (strain ATCC 9039 / DSM 1715 / NCIMB 8712).